A 290-amino-acid chain; its full sequence is Nitrogenase iron protein 2 (290 aa).

ATP is bound at residue 10–17; sequence GKGGIGKS. [4Fe-4S] cluster is bound at residue cysteine 98. Position 101 is an ADP-ribosylarginine; by dinitrogenase reductase ADP-ribosyltransferase (arginine 101). Cysteine 133 provides a ligand contact to [4Fe-4S] cluster.

The protein belongs to the NifH/BchL/ChlL family. As to quaternary structure, homodimer. It depends on [4Fe-4S] cluster as a cofactor. The reversible ADP-ribosylation of Arg-101 inactivates the nitrogenase reductase and regulates nitrogenase activity.

The catalysed reaction is N2 + 8 reduced [2Fe-2S]-[ferredoxin] + 16 ATP + 16 H2O = H2 + 8 oxidized [2Fe-2S]-[ferredoxin] + 2 NH4(+) + 16 ADP + 16 phosphate + 6 H(+). The key enzymatic reactions in nitrogen fixation are catalyzed by the nitrogenase complex, which has 2 components: the iron protein (component 2) and a component 1 which is either a molybdenum-iron protein, a vanadium-iron, or an iron-iron protein. In Azotobacter vinelandii, this protein is Nitrogenase iron protein 2 (vnfH).